A 200-amino-acid polypeptide reads, in one-letter code: Proteasome subunit beta 2 (200 aa).

Residue methionine 1 is a propeptide, removed in mature form; by autocatalysis. The Nucleophile role is filled by threonine 2.

The protein belongs to the peptidase T1B family. As to quaternary structure, the 20S proteasome core is composed of 14 alpha and 14 beta subunits that assemble into four stacked heptameric rings, resulting in a barrel-shaped structure. The two inner rings, each composed of seven catalytic beta subunits, are sandwiched by two outer rings, each composed of seven alpha subunits. The catalytic chamber with the active sites is on the inside of the barrel. Has a gated structure, the ends of the cylinder being occluded by the N-termini of the alpha-subunits. Is capped at one or both ends by the proteasome regulatory ATPase, PAN.

The protein resides in the cytoplasm. The catalysed reaction is Cleavage of peptide bonds with very broad specificity.. With respect to regulation, the formation of the proteasomal ATPase PAN-20S proteasome complex, via the docking of the C-termini of PAN into the intersubunit pockets in the alpha-rings, triggers opening of the gate for substrate entry. Interconversion between the open-gate and close-gate conformations leads to a dynamic regulation of the 20S proteasome proteolysis activity. Component of the proteasome core, a large protease complex with broad specificity involved in protein degradation. This is Proteasome subunit beta 2 from Pyrobaculum islandicum (strain DSM 4184 / JCM 9189 / GEO3).